The primary structure comprises 295 residues: Probable phosphoglycerate mutase PMU1 (295 aa).

The Tele-phosphohistidine intermediate role is filled by His61. Residue Glu170 is the Proton donor/acceptor of the active site.

The protein belongs to the phosphoglycerate mutase family.

It is found in the cytoplasm. The protein resides in the nucleus. Probable phosphomutase that may have a function related to the manipulation of phosphate groups on carbohydrates. Reduces trehalose-6-phosphate levels when overexpressed in TPS2-deleted cells. Reduces 5'-Phosphoribosyl-4-carboxamide-5-aminoimidazole (AICAR) levels, a metabolic intermediate at the crossroads between AMP and histidine biosynthesis pathways, when overexpressed in a ADE3-ADE16-ADE17 triple deletant. This Saccharomyces cerevisiae (strain ATCC 204508 / S288c) (Baker's yeast) protein is Probable phosphoglycerate mutase PMU1.